Reading from the N-terminus, the 416-residue chain is Homogentisate 1,2-dioxygenase (416 aa).

Residue H275 is the Proton acceptor of the active site. Positions 318 and 324 each coordinate Fe cation. Homogentisate-binding residues include Y333 and H354. Position 354 (H354) interacts with Fe cation.

It belongs to the homogentisate dioxygenase family. As to quaternary structure, hexamer; dimer of trimers. It depends on Fe cation as a cofactor.

It catalyses the reaction homogentisate + O2 = 4-maleylacetoacetate + H(+). The protein operates within amino-acid degradation; L-phenylalanine degradation; acetoacetate and fumarate from L-phenylalanine: step 4/6. Its function is as follows. Involved in the catabolism of homogentisate (2,5-dihydroxyphenylacetate or 2,5-OH-PhAc), a central intermediate in the degradation of phenylalanine and tyrosine. Catalyzes the oxidative ring cleavage of the aromatic ring of homogentisate to yield maleylacetoacetate. This is Homogentisate 1,2-dioxygenase from Legionella pneumophila (strain Corby).